Reading from the N-terminus, the 1640-residue chain is RING finger protein 17 (1640 aa).

The RING-type zinc finger occupies 30 to 73 (CTRCGRKVSVASGDHHKFPCGHAFCELCLLAPQEYTTSKCTDCE). Ser-134 bears the Phosphoserine mark. Lys-229 carries the post-translational modification N6-acetyllysine. Disordered stretches follow at residues 348-376 (TDET…TKEM) and 413-435 (DDPI…APVG). Basic and acidic residues predominate over residues 360-373 (APDRHLEGKKKQPT). Tudor domains follow at residues 751–809 (CPLQ…FLEP) and 985–1044 (KWEC…LKTM). Residues 1170–1184 (NEHKVPDSKGKKSES) are compositionally biased toward basic and acidic residues. The segment at 1170 to 1191 (NEHKVPDSKGKKSESRSTGCYR) is disordered. Tudor domains lie at 1246 to 1303 (SWKK…PDTP) and 1496 to 1556 (DFSS…LMQY).

Interacts with MXD1, MXD3, MXD4, MXI1 and PIWIL1. Self-associates. In terms of tissue distribution, expressed at high levels in adult testis. Expressed in male germ cells (at protein level). Expressed at lower levels in adult thyroid, submaxillary gland, ovary and epididymis.

It is found in the cytoplasm. The protein localises to the nucleus. Seems to be involved in regulation of transcriptional activity of MYC. In vitro, inhibits DNA-binding activity of Mad-MAX heterodimers. Can recruit Mad transcriptional repressors (MXD1, MXD3, MXD4 and MXI1) to the cytoplasm. May be involved in spermiogenesis. This chain is RING finger protein 17 (Rnf17), found in Mus musculus (Mouse).